The chain runs to 530 residues: AP-4 complex subunit mu (530 aa).

The tract at residues 164–187 is disordered; it reads PKQGVKPIHSGSKNSSSGGSSLST. The span at 173–186 shows a compositional bias: low complexity; sequence SGSKNSSSGGSSLS. One can recognise an MHD domain in the interval 227-527; the sequence is DNEIYIDLCE…ITDSKSFVSR (301 aa).

Belongs to the adaptor complexes medium subunit family. In terms of assembly, may be part of the adaptor protein complex 4 (AP-4), a heterotetramer composed of two large adaptins (epsilon-type subunitand beta-type subunit), a medium adaptin (mu-type subunit) and a small adaptin (sigma-type).

It is found in the golgi apparatus. The protein resides in the trans-Golgi network membrane. The protein localises to the early endosome. In terms of biological role, probable component of an adaptor protein complex. Adaptor protein complexes are vesicle coat components involved both in vesicle formation and cargo selection. They control the vesicular transport of proteins in different trafficking pathways. The sequence is that of AP-4 complex subunit mu (apm4) from Dictyostelium discoideum (Social amoeba).